The sequence spans 105 residues: Large ribosomal subunit protein uL24 (105 aa).

It belongs to the universal ribosomal protein uL24 family. As to quaternary structure, part of the 50S ribosomal subunit.

In terms of biological role, one of two assembly initiator proteins, it binds directly to the 5'-end of the 23S rRNA, where it nucleates assembly of the 50S subunit. Its function is as follows. One of the proteins that surrounds the polypeptide exit tunnel on the outside of the subunit. This Chromohalobacter salexigens (strain ATCC BAA-138 / DSM 3043 / CIP 106854 / NCIMB 13768 / 1H11) protein is Large ribosomal subunit protein uL24.